The following is a 104-amino-acid chain: MIRKAFVMQVNADAHEEYQRRHNPIWPELEAVLKSHGAHHYAIYLDQERNLLFATVEIESEERWNAVASTDVCQRWWKHMRDVMPANPDNSPISAELKEVFYLQ.

Substrate is bound at residue Tyr18. His22 serves as the catalytic Proton donor. Substrate-binding positions include Tyr41 and 76–77; that span reads WW.

Belongs to the rhamnose mutarotase family. In terms of assembly, homodimer.

The protein resides in the cytoplasm. The enzyme catalyses alpha-L-rhamnose = beta-L-rhamnose. It functions in the pathway carbohydrate metabolism; L-rhamnose metabolism. Functionally, involved in the anomeric conversion of L-rhamnose. This Salmonella dublin (strain CT_02021853) protein is L-rhamnose mutarotase.